Consider the following 432-residue polypeptide: Cytoplasmic 60S subunit biogenesis factor REH1 (432 aa).

Residues 6–30 form a C2H2-type 1 zinc finger; that stretch reads FTCNCCVIQFKTSDLQRYHMKTEWH. The segment at 79 to 150 is disordered; the sequence is QSNALPQKQK…NTDYGEDTVS (72 aa). Positions 86-98 are enriched in basic residues; sequence KQKKPIKSKRGRK. The span at 105-117 shows a compositional bias: basic and acidic residues; that stretch reads KRKDRDIAKEKQN. The segment covering 118-143 has biased composition (polar residues); sequence RSVSPSGSISSQLSNLTVGTENTNTD. 2 consecutive C2H2-type zinc fingers follow at residues 186-209 and 237-261; these read TECI…FSEH and HNCL…SKRH.

The protein belongs to the REI1 family. In terms of assembly, associates with nascent pre-60S particles that have not yet entered the translating pool, and is released from mature 60S subunits. Interacts with pre-60S factors NMD3, LSG1, and TIF6.

The protein localises to the cytoplasm. Functionally, pre-60S-associated cytoplasmic factor involved in the cytoplasmic maturation of the 60S subunit. May act redundantly with REI1 to directly promote a stabilizing structural rearrangement in cytoplasmic 60S subunit maturation independent on the REI1-specific ARX1 recycling. The sequence is that of Cytoplasmic 60S subunit biogenesis factor REH1 (REH1) from Saccharomyces cerevisiae (strain ATCC 204508 / S288c) (Baker's yeast).